Here is a 323-residue protein sequence, read N- to C-terminus: tRNA U34 carboxymethyltransferase (323 aa).

Carboxy-S-adenosyl-L-methionine is bound by residues K91, W105, K110, G130, 152 to 154 (DPT), 181 to 182 (IE), M196, Y200, and R315.

It belongs to the class I-like SAM-binding methyltransferase superfamily. CmoB family. As to quaternary structure, homotetramer.

The catalysed reaction is carboxy-S-adenosyl-L-methionine + 5-hydroxyuridine(34) in tRNA = 5-carboxymethoxyuridine(34) in tRNA + S-adenosyl-L-homocysteine + H(+). Its function is as follows. Catalyzes carboxymethyl transfer from carboxy-S-adenosyl-L-methionine (Cx-SAM) to 5-hydroxyuridine (ho5U) to form 5-carboxymethoxyuridine (cmo5U) at position 34 in tRNAs. This Salmonella gallinarum (strain 287/91 / NCTC 13346) protein is tRNA U34 carboxymethyltransferase.